We begin with the raw amino-acid sequence, 351 residues long: Anthranilate phosphoribosyltransferase (351 aa).

5-phospho-alpha-D-ribose 1-diphosphate-binding positions include Gly-85, 88-89, Ser-93, 95-98, 113-121, and Thr-125; these read GD, NIST, and KHGNRAASS. Gly-85 is an anthranilate binding site. Residue Ser-97 participates in Mg(2+) binding. An anthranilate-binding site is contributed by Asn-116. Position 171 (Arg-171) interacts with anthranilate. Mg(2+)-binding residues include Asp-229 and Glu-230.

Belongs to the anthranilate phosphoribosyltransferase family. As to quaternary structure, homodimer. Mg(2+) serves as cofactor.

The catalysed reaction is N-(5-phospho-beta-D-ribosyl)anthranilate + diphosphate = 5-phospho-alpha-D-ribose 1-diphosphate + anthranilate. Its pathway is amino-acid biosynthesis; L-tryptophan biosynthesis; L-tryptophan from chorismate: step 2/5. Catalyzes the transfer of the phosphoribosyl group of 5-phosphorylribose-1-pyrophosphate (PRPP) to anthranilate to yield N-(5'-phosphoribosyl)-anthranilate (PRA). The chain is Anthranilate phosphoribosyltransferase from Saccharopolyspora erythraea (strain ATCC 11635 / DSM 40517 / JCM 4748 / NBRC 13426 / NCIMB 8594 / NRRL 2338).